A 199-amino-acid chain; its full sequence is Transgelin-3 (199 aa).

One can recognise a Calponin-homology (CH) domain in the interval 24–136 (ADLENKLVDW…RTLMALGSVA (113 aa)). Position 163 is a phosphoserine (S163). One copy of the Calponin-like repeat lies at 174–199 (IGLQMGSNKGASQAGMTGYGMPRQIM). The span at 178 to 188 (MGSNKGASQAG) shows a compositional bias: polar residues. The segment at 178–199 (MGSNKGASQAGMTGYGMPRQIM) is disordered.

This sequence belongs to the calponin family. Abundant and ubiquitous expression in neurons.

The chain is Transgelin-3 (Tagln3) from Rattus norvegicus (Rat).